Here is a 100-residue protein sequence, read N- to C-terminus: MIREERLLKVLRAPHVSEKASTAMEKSNAIVLKVAKDATKAEIKAAVQKLFEVEVEGVNTLLVKGKTKRHGQRIGRRSDWKKAYVTLKEGQNMDFIGGAE.

It belongs to the universal ribosomal protein uL23 family. In terms of assembly, part of the 50S ribosomal subunit. Contacts protein L29, and trigger factor when it is bound to the ribosome.

Its function is as follows. One of the early assembly proteins it binds 23S rRNA. One of the proteins that surrounds the polypeptide exit tunnel on the outside of the ribosome. Forms the main docking site for trigger factor binding to the ribosome. The chain is Large ribosomal subunit protein uL23 from Photorhabdus laumondii subsp. laumondii (strain DSM 15139 / CIP 105565 / TT01) (Photorhabdus luminescens subsp. laumondii).